The following is a 310-amino-acid chain: MSSKLLTIQLLEELVHAAELNQEGKTADYIPELANVNQELTAIAVQTLGEKTLAYSNNPLHPVTLQSTGKMIPLIGLLEEFGADQLFEWVKVEPSGDDFASITRLEQFGPKPSNPMLNAGAIALCSRIPGVGEQQFRWLEHWVQKLFNQRLSINPLVFASEKRTGNRNRALAYLLKSRNNLGADVHETLDLYFALCSYEAMLDQMLYLPTLLANSGKDSDTGEQILSMETCKITLAIMATCGLYDETGTHMVKTGMPAKSGVSGYTIAVVPGKAGIVVLSPRVNAKGNSIRGEIMLEGLSKAMNWHFALP.

Residues serine 67, asparagine 118, glutamate 161, asparagine 168, tyrosine 192, tyrosine 244, and valine 262 each contribute to the substrate site.

This sequence belongs to the glutaminase family. In terms of assembly, homotetramer.

The catalysed reaction is L-glutamine + H2O = L-glutamate + NH4(+). The protein is Glutaminase of Legionella pneumophila (strain Lens).